Consider the following 317-residue polypeptide: CXXC-type zinc finger protein 5 (317 aa).

The span at 1 to 49 shows a compositional bias: low complexity; that stretch reads MSSLSSGPQDTGGSSSSSSNGSSGSGPKAGVADKSAAVAAAAPASVADD. The segment at 1–96 is disordered; the sequence is MSSLSSGPQD…GSGGGSMMGG (96 aa). Gly residues predominate over residues 83–94; the sequence is GGSGGSGGGSMM. The CXXC-type zinc finger occupies 251-292; the sequence is GKKKRKRCGMCAPCRRRINCEQCSSCRNRKTGHQICKFRKCE. Positions 252–257 match the Nuclear localization signal motif; sequence KKKRKR. Residues Cys-258, Cys-261, Cys-264, Cys-270, Cys-273, Cys-276, Cys-286, and Cys-291 each contribute to the Zn(2+) site.

As to quaternary structure, interacts with DVL1. Interacts with RBPJ.

The protein resides in the nucleus. It is found in the cytoplasm. Its function is as follows. May indirectly participate in activation of the NF-kappa-B and MAPK pathways. Acts as a mediator of BMP4-mediated modulation of canonical Wnt signaling activity in neural stem cells. Required for DNA damage-induced ATM phosphorylation, p53 activation and cell cycle arrest. Involved in myelopoiesis. Binds to the oxygen responsive element of COX4I2 and represses its transcription under hypoxia conditions (4% oxygen), as well as normoxia conditions (20% oxygen). May repress COX4I2 transactivation induced by CHCHD2 and RBPJ. Binds preferentially to DNA containing cytidine-phosphate-guanosine (CpG) dinucleotides over CpH (H=A, T, and C), hemimethylated-CpG and hemimethylated-hydroxymethyl-CpG. The polypeptide is CXXC-type zinc finger protein 5 (CXXC5) (Bos taurus (Bovine)).